The sequence spans 123 residues: S-adenosylmethionine decarboxylase proenzyme 2 (123 aa).

The active-site Schiff-base intermediate with substrate; via pyruvic acid is S65. A Pyruvic acid (Ser); by autocatalysis modification is found at S65. H70 (proton acceptor; for processing activity) is an active-site residue. Catalysis depends on C85, which acts as the Proton donor; for catalytic activity.

Belongs to the prokaryotic AdoMetDC family. Type 1 subfamily. As to quaternary structure, heterotetramer of two alpha and two beta chains arranged as a dimer of alpha/beta heterodimers. It depends on pyruvate as a cofactor. Is synthesized initially as an inactive proenzyme. Formation of the active enzyme involves a self-maturation process in which the active site pyruvoyl group is generated from an internal serine residue via an autocatalytic post-translational modification. Two non-identical subunits are generated from the proenzyme in this reaction, and the pyruvate is formed at the N-terminus of the alpha chain, which is derived from the carboxyl end of the proenzyme. The post-translation cleavage follows an unusual pathway, termed non-hydrolytic serinolysis, in which the side chain hydroxyl group of the serine supplies its oxygen atom to form the C-terminus of the beta chain, while the remainder of the serine residue undergoes an oxidative deamination to produce ammonia and the pyruvoyl group blocking the N-terminus of the alpha chain.

The enzyme catalyses S-adenosyl-L-methionine + H(+) = S-adenosyl 3-(methylsulfanyl)propylamine + CO2. The protein operates within amine and polyamine biosynthesis; S-adenosylmethioninamine biosynthesis; S-adenosylmethioninamine from S-adenosyl-L-methionine: step 1/1. In terms of biological role, catalyzes the decarboxylation of S-adenosylmethionine to S-adenosylmethioninamine (dcAdoMet), the propylamine donor required for the synthesis of the polyamines spermine and spermidine from the diamine putrescine. In Bacillus anthracis, this protein is S-adenosylmethionine decarboxylase proenzyme 2.